A 334-amino-acid polypeptide reads, in one-letter code: NH(3)-dependent NAD(+) synthetase (334 aa).

ATP is bound at residue 47–54 (GLSGGIDS). Aspartate 53 is a Mg(2+) binding site. Arginine 183 is a binding site for deamido-NAD(+). Threonine 203 is a binding site for ATP. Glutamate 208 provides a ligand contact to Mg(2+). Deamido-NAD(+)-binding residues include lysine 216 and aspartate 223. Residues lysine 232 and threonine 254 each contribute to the ATP site.

It belongs to the NAD synthetase family. Homodimer.

It carries out the reaction deamido-NAD(+) + NH4(+) + ATP = AMP + diphosphate + NAD(+) + H(+). Its pathway is cofactor biosynthesis; NAD(+) biosynthesis; NAD(+) from deamido-NAD(+) (ammonia route): step 1/1. Catalyzes the ATP-dependent amidation of deamido-NAD to form NAD. Uses ammonia as a nitrogen source. The protein is NH(3)-dependent NAD(+) synthetase of Rhizobium meliloti (strain 1021) (Ensifer meliloti).